We begin with the raw amino-acid sequence, 663 residues long: MKKGKILALAGVALLATGVLAACSNSTSNSSNSSSSGADQVFNYIYEVDPENLNYLISSKAATTDLTANLIDGLLENDNYGNLVPSMAEDWTVSKDGLTYTYTLRKDAKWYTSDGEEYADVKAQDFVAGLKYAADNKSETLYLVQSSIKGLDDYVNGKTKDFSSVGVKAVDDHTVQYTLNEPESFWNSKTTMGILYPVNEEFLKSKGDKFAQSADPTSLLYNGPFLLKSITSKSSIEFAKNPNYWDKDNVHVSDVKLTYFDGQDQGKPAEQFAKGALSAARLAPTSATFSKVEKEFKDNIVYTPQDSTSYLVGVNIDRQAYNHTAKSSDAQKSSTKKALMNKDFRQALSFAFDRTAYASQVNGKEGATKMLRNLYIPPTFVQADGKSFGELVKEKVASYGDEWKDVNFDDAQDGLYNKEKAKAEFAKAKKALQEEGVEFPIHLDMPVDQTATAKVQRVQSLKQSIESSLGTDNVVVDIHQMKTDDVLNITYYAASAAEEDWDISDNVGWSPDYQDPSTYLEIIKPGGENTKTFLGFDGKENAAAEQVGLKEYAKLVDEAAAEKTDVNKRYEKYATAQAWLTDSALLIPTTSRTGRPVLTKIVPFTAPFAWSGAKGRDMASYKYLKLQDKAVTAKEYQKAQEKWNKERAESNKKAQEELEKHVK.

The first 22 residues, 1–22 (MKKGKILALAGVALLATGVLAA), serve as a signal peptide directing secretion. Cys-23 is lipidated: N-palmitoyl cysteine. The S-diacylglycerol cysteine moiety is linked to residue Cys-23. The interval 637-663 (QKAQEKWNKERAESNKKAQEELEKHVK) is disordered.

Belongs to the bacterial solute-binding protein 5 family.

The protein localises to the cell membrane. Its function is as follows. May be involved in the expression of cell surface properties important for colonization of the human oral cavity. It may also be involved in uptake processes. The chain is Oligopeptide-binding protein SarA (sarA) from Streptococcus gordonii (strain Challis / ATCC 35105 / BCRC 15272 / CH1 / DL1 / V288).